Consider the following 239-residue polypeptide: MASEELACKLERRLRREEAEESGPQLAPLGAPAPEPKPEPEPPARAPTASADAELSAQLSRRLDINEGAARPRRCRVFNPYTEFPEFSRRLIKDLESMFKLYDAGRDGFIDLMELKLMMEKLGAPQTHLGLKSMIKEVDEDFDGKLSFREFLLIFHKAAAGELQEDSGLMALAKLSEIDVALEGVKGAKNFFEAKVQALSSASKFEAELKAEQDERKREEEERRLRQAAFQKLKANFNT.

A compositionally biased stretch (basic and acidic residues) spans 1 to 18; it reads MASEELACKLERRLRREE. The segment at 1–53 is disordered; that stretch reads MASEELACKLERRLRREEAEESGPQLAPLGAPAPEPKPEPEPPARAPTASADA. EF-hand domains lie at 90–125 and 126–161; these read RLIKDLESMFKLYDAGRDGFIDLMELKLMMEKLGAP and QTHLGLKSMIKEVDEDFDGKLSFREFLLIFHKAAAG. Ca(2+) is bound by residues Asp-103, Asp-107, Glu-114, Asp-139, Asp-141, Asp-143, Lys-145, and Glu-150. A Phosphoserine modification is found at Ser-201.

It localises to the mitochondrion inner membrane. Its function is as follows. Acts as a calcium sensor for mitochondrial flash (mitoflash) activation, an event characterized by stochastic bursts of superoxide production. May play a role in neuronal differentiation. The chain is EF-hand domain-containing protein D1 (EFHD1) from Homo sapiens (Human).